The primary structure comprises 155 residues: Calmodulin, flagellar (155 aa).

4 EF-hand domains span residues 14 to 49 (EQIA…LGQN), 50 to 85 (PTEA…KMKD), 87 to 122 (DNEE…LGEK), and 123 to 155 (LTDE…MMQK). Positions 27, 29, 31, 33, 38, 63, 65, 67, 69, 74, 100, 102, 104, 111, 136, 138, 140, 142, and 147 each coordinate Ca(2+).

The protein belongs to the calmodulin family.

Its subcellular location is the cell projection. It is found in the cilium. The protein localises to the flagellum. Functionally, calmodulin mediates the control of a large number of enzymes, ion channels and other proteins by Ca(2+). Among the enzymes to be stimulated by the calmodulin-Ca(2+) complex are a number of protein kinases and phosphatases. The protein is Calmodulin, flagellar (CAM1) of Naegleria gruberi (Amoeba).